Consider the following 176-residue polypeptide: Inorganic pyrophosphatase (176 aa).

Positions 31, 45, and 57 each coordinate substrate. Mg(2+)-binding residues include D67, D72, and D104. Position 142 (Y142) interacts with substrate.

Belongs to the PPase family. In terms of assembly, homohexamer. Requires Mg(2+) as cofactor.

The protein resides in the cytoplasm. The catalysed reaction is diphosphate + H2O = 2 phosphate + H(+). In terms of biological role, catalyzes the hydrolysis of inorganic pyrophosphate (PPi) forming two phosphate ions. The chain is Inorganic pyrophosphatase from Haemophilus influenzae (strain ATCC 51907 / DSM 11121 / KW20 / Rd).